The following is a 292-amino-acid chain: Putative FNIP repeat-containing protein L281 (292 aa).

Residues 95–134 (FNKSIDDIPSTITHLSLGAAFNGEVSNIPTSVTHLKLGVS) form an FNIP repeat.

The protein is Putative FNIP repeat-containing protein L281 of Acanthamoeba polyphaga mimivirus (APMV).